We begin with the raw amino-acid sequence, 529 residues long: Bifunctional purine biosynthesis protein PurH (529 aa).

Positions 1–148 (MQQRRPVRRA…KNHKDVAIVV (148 aa)) constitute an MGS-like domain.

Belongs to the PurH family.

It carries out the reaction (6R)-10-formyltetrahydrofolate + 5-amino-1-(5-phospho-beta-D-ribosyl)imidazole-4-carboxamide = 5-formamido-1-(5-phospho-D-ribosyl)imidazole-4-carboxamide + (6S)-5,6,7,8-tetrahydrofolate. The catalysed reaction is IMP + H2O = 5-formamido-1-(5-phospho-D-ribosyl)imidazole-4-carboxamide. The protein operates within purine metabolism; IMP biosynthesis via de novo pathway; 5-formamido-1-(5-phospho-D-ribosyl)imidazole-4-carboxamide from 5-amino-1-(5-phospho-D-ribosyl)imidazole-4-carboxamide (10-formyl THF route): step 1/1. It functions in the pathway purine metabolism; IMP biosynthesis via de novo pathway; IMP from 5-formamido-1-(5-phospho-D-ribosyl)imidazole-4-carboxamide: step 1/1. In Salmonella enteritidis PT4 (strain P125109), this protein is Bifunctional purine biosynthesis protein PurH.